The following is a 178-amino-acid chain: GPI mannosyltransferase 2 subunit C167.09 (178 aa).

A signal peptide spans 1 to 20 (MREFRLIFVLLFFLPSFAIA). The Lumenal portion of the chain corresponds to 21 to 152 (NTEIINVETG…LGFLPKSVLP (132 aa)). Asn48, Asn49, Asn106, Asn115, and Asn122 each carry an N-linked (GlcNAc...) asparagine glycan. A helical transmembrane segment spans residues 153–173 (IVGFVFVIILIALICMTNLFI). At 174–178 (KHKRD) the chain is on the cytoplasmic side.

In terms of assembly, part of the GPI mannosyltransferase 2 complex composed of gpi18 and C167.09.

It localises to the endoplasmic reticulum membrane. The protein operates within glycolipid biosynthesis; glycosylphosphatidylinositol-anchor biosynthesis. Essential component of the GPI mannosyltransferase 2 complex. Responsible for the transfer of the second mannose to the glycosylphosphatidylinositol during GPI precursor assembly. In Schizosaccharomyces pombe (strain 972 / ATCC 24843) (Fission yeast), this protein is GPI mannosyltransferase 2 subunit C167.09.